The primary structure comprises 285 residues: MDVLTLPAYGKINLTLKVLGRRSDGYHNLSTIFQSIALADRLTFSRCREGIRLETSGLPVPQGPENLAYRAAARLQSRYGFPGVRITLKKQIPLAAGLAGGSADAAATLIGVNALFNLGLTPGQLAREGAALGSDVPFCVIGGTALGRGRGEELSLLPPLPTLWLVLVKPSFGVSTAAVYRGWDASPGQTPMEAPDEERALAAIRRGDRAGIMASLGNDLEAVTCRLYPEVMAIKMRLLAEGAERAVMCGSGPAVFGVAADGETARRIASRLQETYPETIVTRTL.

The active site involves Lys-11. ATP is bound at residue Pro-93 to Ala-103. Asp-135 is an active-site residue.

The protein belongs to the GHMP kinase family. IspE subfamily.

The enzyme catalyses 4-CDP-2-C-methyl-D-erythritol + ATP = 4-CDP-2-C-methyl-D-erythritol 2-phosphate + ADP + H(+). It functions in the pathway isoprenoid biosynthesis; isopentenyl diphosphate biosynthesis via DXP pathway; isopentenyl diphosphate from 1-deoxy-D-xylulose 5-phosphate: step 3/6. Catalyzes the phosphorylation of the position 2 hydroxy group of 4-diphosphocytidyl-2C-methyl-D-erythritol. The chain is 4-diphosphocytidyl-2-C-methyl-D-erythritol kinase from Moorella thermoacetica (strain ATCC 39073 / JCM 9320).